A 467-amino-acid polypeptide reads, in one-letter code: Ammonium transporter Rh type C (467 aa).

The Cytoplasmic segment spans residues M1–L3. Residues R4 to V24 form a helical membrane-spanning segment. The Extracellular portion of the chain corresponds to R25–Y55. N42 carries N-linked (GlcNAc...) asparagine glycosylation. A helical transmembrane segment spans residues P56–L76. Residues K77–G80 lie on the Cytoplasmic side of the membrane. Residues F81–M101 traverse the membrane as a helical segment. The Extracellular portion of the chain corresponds to Q102–S119. The helical transmembrane segment at L120–G139 threads the bilayer. The Cytoplasmic portion of the chain corresponds to K140–Q145. The chain crosses the membrane as a helical span at residues I146–L168. Topologically, residues H169–A173 are extracellular. A helical transmembrane segment spans residues G174 to L194. The Cytoplasmic segment spans residues N195–D213. The chain crosses the membrane as a helical span at residues L214 to V234. The Extracellular portion of the chain corresponds to S235 to A245. The chain crosses the membrane as a helical span at residues I246–V266. Over N267–K271 the chain is Cytoplasmic. Residues L272–A292 traverse the membrane as a helical segment. Topologically, residues E293–M295 are extracellular. A helical transmembrane segment spans residues L296–F316. The Cytoplasmic segment spans residues T317–N337. A helical membrane pass occupies residues L338–T358. Residues E359–A390 lie on the Extracellular side of the membrane. A helical transmembrane segment spans residues A391 to L411. Topologically, residues K412–K467 are cytoplasmic.

Belongs to the ammonium transporter (TC 2.A.49) family. Rh subfamily. Homotrimer.

The protein localises to the apical cell membrane. Functions as an ammonia transporter. This is Ammonium transporter Rh type C (rhcg) from Xenopus tropicalis (Western clawed frog).